A 160-amino-acid chain; its full sequence is Phosphopantetheine adenylyltransferase (160 aa).

Ser-8 lines the substrate pocket. Residues Ser-8 to Phe-9 and His-16 contribute to the ATP site. Residues Lys-40, Thr-72, and Arg-86 each contribute to the substrate site. ATP contacts are provided by residues Gly-87–Arg-89, Glu-97, and Tyr-122–Ser-128.

This sequence belongs to the bacterial CoaD family. As to quaternary structure, homohexamer. Requires Mg(2+) as cofactor.

The protein resides in the cytoplasm. It carries out the reaction (R)-4'-phosphopantetheine + ATP + H(+) = 3'-dephospho-CoA + diphosphate. Its pathway is cofactor biosynthesis; coenzyme A biosynthesis; CoA from (R)-pantothenate: step 4/5. Its function is as follows. Reversibly transfers an adenylyl group from ATP to 4'-phosphopantetheine, yielding dephospho-CoA (dPCoA) and pyrophosphate. This Synechococcus sp. (strain CC9311) protein is Phosphopantetheine adenylyltransferase.